The primary structure comprises 274 residues: MVKSLQLAHQLKDKKILLIGGGEVGLTRLYKLIPTGCKLTLVSPDLHKSIIPKFGKFIQNEDQPDYREDAKRFINPNWDPTKNEIYEYIRSDFKDEYLDLEDENDAWYIIMTCIPDHPESARIYHLCKERFGKQQLVNVADKPDLCDFYFGANLEIGDRLQILISTNGLSPRFGALVRDEIRNLFTQMGDLALEDAVVKLGELRRGIRLLAPDDKDVKYRMDWARRCTDLFGIQHCHNIDVKRLLDLFKVMFQEQNCSLQFPPRERLLSEYCSS.

NAD(+) contacts are provided by residues 23-24 (EV), 43-45 (SPD), and F93. D141 functions as the Proton acceptor in the catalytic mechanism.

The protein belongs to the precorrin-2 dehydrogenase / sirohydrochlorin ferrochelatase family. MET8 subfamily. Homodimer.

It carries out the reaction precorrin-2 + NAD(+) = sirohydrochlorin + NADH + 2 H(+). The catalysed reaction is siroheme + 2 H(+) = sirohydrochlorin + Fe(2+). It functions in the pathway porphyrin-containing compound metabolism; siroheme biosynthesis; siroheme from sirohydrochlorin: step 1/1. Its pathway is porphyrin-containing compound metabolism; siroheme biosynthesis; sirohydrochlorin from precorrin-2: step 1/1. Catalyzes the conversion of precorrin-2 into siroheme. This reaction consist of the NAD-dependent oxidation of precorrin-2 into sirohydrochlorin and its subsequent ferrochelation into siroheme. This is Siroheme biosynthesis protein MET8 from Saccharomyces cerevisiae (strain ATCC 204508 / S288c) (Baker's yeast).